A 1009-amino-acid chain; its full sequence is DENN domain-containing protein 2A (1009 aa).

Disordered regions lie at residues A15–Q153, K171–S334, K434–K479, and K498–H532. Composition is skewed to basic and acidic residues over residues N45–V59, Q130–L147, H218–L247, and H275–K284. The segment covering P297–S314 has biased composition (pro residues). The span at K434–R443 shows a compositional bias: basic and acidic residues. Over residues L503–K513 the composition is skewed to polar residues. S551 is modified (phosphoserine). The region spanning E566 to L715 is the uDENN domain. In terms of domain architecture, cDENN spans R737–E870. The 98-residue stretch at R872–A969 folds into the dDENN domain.

The protein resides in the cytoplasm. The protein localises to the cytoskeleton. Its function is as follows. Guanine nucleotide exchange factor (GEF) which may activate RAB9A and RAB9B. Promotes the exchange of GDP to GTP, converting inactive GDP-bound Rab proteins into their active GTP-bound form. May play a role in late endosomes back to trans-Golgi network/TGN transport. This chain is DENN domain-containing protein 2A (DENND2A), found in Homo sapiens (Human).